Here is a 154-residue protein sequence, read N- to C-terminus: UPF0178 protein in pahZ1 5'region (154 aa).

Belongs to the UPF0178 family.

In Paucimonas lemoignei (Pseudomonas lemoignei), this protein is UPF0178 protein in pahZ1 5'region.